A 396-amino-acid chain; its full sequence is DNA excision repair protein ERCC-8 (396 aa).

WD repeat units follow at residues 33–73 (NKDR…LYDL), 88–129 (CSIG…VWDT), 133–173 (QTAD…LCDL), 177–216 (SCSH…LWDV), 235–274 (QAVE…LWNS), 281–321 (LVNY…VYTV), and 325–363 (EQIT…AWVP). A disordered region spans residues 371–396 (DDDETTTKSQLNPAFEDAWSSSDEEG). Serine 390, serine 391, and serine 392 each carry phosphoserine.

As to quaternary structure, part of the CSA complex (also named DCX(ERCC8) complex), a DCX E3 ubiquitin-protein ligase complex containing ERCC8, RBX1, DDB1 and CUL4A; the CSA complex interacts with RNA polymerase II; upon UV irradiation it interacts with the COP9 signalosome and preferentially with the hyperphosphorylated form of RNA polymerase II. Interacts with ERCC6/CSB (via CIM motif); promoting recruitment to lesion-stalled RNA polymerase II (Pol II). Interacts with KIAA1530/UVSSA. Interacts with a subunit of RNA polymerase II TFIIH.

It localises to the nucleus. It is found in the chromosome. The protein localises to the nucleus matrix. Its pathway is protein modification; protein ubiquitination. Functionally, substrate-recognition component of the CSA complex, a DCX (DDB1-CUL4-X-box) E3 ubiquitin-protein ligase complex, involved in transcription-coupled nucleotide excision repair (TC-NER), a process during which RNA polymerase II-blocking lesions are rapidly removed from the transcribed strand of active genes. Following recruitment to lesion-stalled RNA polymerase II (Pol II), the CSA complex mediates ubiquitination of Pol II subunit POLR2A/RPB1 at 'Lys-1268', a critical TC-NER checkpoint, governing RNA Pol II stability and initiating DNA damage excision by TFIIH recruitment. The CSA complex also promotes the ubiquitination and subsequent proteasomal degradation of ERCC6/CSB in a UV-dependent manner; ERCC6 degradation is essential for the recovery of RNA synthesis after transcription-coupled repair. Also plays a role in DNA double-strand breaks (DSSBs) repair by non-homologous end joining (NHEJ). The chain is DNA excision repair protein ERCC-8 from Homo sapiens (Human).